Here is a 476-residue protein sequence, read N- to C-terminus: Siroheme synthase (476 aa).

Positions 1–207 (MTANALFPLF…QRHAEAEAVL (207 aa)) are precorrin-2 dehydrogenase /sirohydrochlorin ferrochelatase. Residues 25-26 (KV) and 46-47 (PS) contribute to the NAD(+) site. Ser132 bears the Phosphoserine mark. The interval 220-476 (GSVTLVGAGA…SAPCPPARIL (257 aa)) is uroporphyrinogen-III C-methyltransferase. Asp252 (proton acceptor) is an active-site residue. The Proton donor role is filled by Lys274. S-adenosyl-L-methionine contacts are provided by residues 305 to 307 (GGD), Val310, 335 to 336 (TA), Met387, and Gly416.

The protein in the N-terminal section; belongs to the precorrin-2 dehydrogenase / sirohydrochlorin ferrochelatase family. It in the C-terminal section; belongs to the precorrin methyltransferase family.

It carries out the reaction uroporphyrinogen III + 2 S-adenosyl-L-methionine = precorrin-2 + 2 S-adenosyl-L-homocysteine + H(+). The enzyme catalyses precorrin-2 + NAD(+) = sirohydrochlorin + NADH + 2 H(+). It catalyses the reaction siroheme + 2 H(+) = sirohydrochlorin + Fe(2+). Its pathway is cofactor biosynthesis; adenosylcobalamin biosynthesis; precorrin-2 from uroporphyrinogen III: step 1/1. It participates in cofactor biosynthesis; adenosylcobalamin biosynthesis; sirohydrochlorin from precorrin-2: step 1/1. The protein operates within porphyrin-containing compound metabolism; siroheme biosynthesis; precorrin-2 from uroporphyrinogen III: step 1/1. It functions in the pathway porphyrin-containing compound metabolism; siroheme biosynthesis; siroheme from sirohydrochlorin: step 1/1. Its pathway is porphyrin-containing compound metabolism; siroheme biosynthesis; sirohydrochlorin from precorrin-2: step 1/1. Multifunctional enzyme that catalyzes the SAM-dependent methylations of uroporphyrinogen III at position C-2 and C-7 to form precorrin-2 via precorrin-1. Then it catalyzes the NAD-dependent ring dehydrogenation of precorrin-2 to yield sirohydrochlorin. Finally, it catalyzes the ferrochelation of sirohydrochlorin to yield siroheme. This is Siroheme synthase from Xylella fastidiosa (strain M12).